We begin with the raw amino-acid sequence, 89 residues long: uncharacterized protein (89 aa).

Residues 1 to 27 (MKKAAAVLLSLGLVFGFSYGAGHVAEA) form the signal peptide.

This is an uncharacterized protein from Bacillus subtilis (strain 168).